Here is a 382-residue protein sequence, read N- to C-terminus: UBP1-associated proteins 1B (382 aa).

A disordered region spans residues 1–99; sequence MAKEGEERKK…SDESEEIVDS (99 aa). Residues 10 to 22 show a composition bias toward basic residues; it reads KEKKEKKERKERK. Residues 23 to 34 are compositionally biased toward basic and acidic residues; sequence RREAEELAVREK. Residues 163–248 form the RRM domain; sequence RNIFVRGLGW…RPFNSGKPRE (86 aa).

Its subcellular location is the nucleus. Its function is as follows. Acts as a component of a complex regulating the turnover of mRNAs in the nucleus. Binds with high affinity to RNA molecules that contain U-rich sequences in 3'-UTRs. May function in complex with UBP1 and contribute to the stabilization of mRNAs in the nucleus. This is UBP1-associated proteins 1B (UBA1B) from Arabidopsis thaliana (Mouse-ear cress).